The sequence spans 300 residues: Acetylglutamate kinase (300 aa).

Residues 73 to 74 (GG), Arg-95, and Asn-197 contribute to the substrate site.

Belongs to the acetylglutamate kinase family. ArgB subfamily.

The protein localises to the cytoplasm. The enzyme catalyses N-acetyl-L-glutamate + ATP = N-acetyl-L-glutamyl 5-phosphate + ADP. The protein operates within amino-acid biosynthesis; L-arginine biosynthesis; N(2)-acetyl-L-ornithine from L-glutamate: step 2/4. In terms of biological role, catalyzes the ATP-dependent phosphorylation of N-acetyl-L-glutamate. The sequence is that of Acetylglutamate kinase from Bordetella bronchiseptica (strain ATCC BAA-588 / NCTC 13252 / RB50) (Alcaligenes bronchisepticus).